A 177-amino-acid chain; its full sequence is MRITISGSPGSGTTTLGRSIAEKYSYRYVSAGEVFRGLAKERNMDLAAFGKIAETDPAIDLEIDARQKEIGESSDDIILEGRLAGWMVENADLKILLCASPECRSTRIAAREGLTEKQAFEMTIEREACEAGRYMEYYEIDILDFSPYDLILNSETFSANELFAIVDAAVSSLLKRE.

ATP is bound at residue 7-15 (GSPGSGTTT).

It belongs to the cytidylate kinase family. Type 2 subfamily.

Its subcellular location is the cytoplasm. It catalyses the reaction CMP + ATP = CDP + ADP. The catalysed reaction is dCMP + ATP = dCDP + ADP. In Methanocorpusculum labreanum (strain ATCC 43576 / DSM 4855 / Z), this protein is Cytidylate kinase.